Consider the following 98-residue polypeptide: Complement inhibitor RaCI2 (98 aa).

The first 21 residues, 1–21, serve as a signal peptide directing secretion; that stretch reads MNAVTVLAFTAFALIVHDCYS. 3 disulfide bridges follow: cysteine 35–cysteine 59, cysteine 40–cysteine 61, and cysteine 55–cysteine 76.

Belongs to the RaCI family. As to expression, expressed in salivary glands.

Its subcellular location is the secreted. Functionally, complement inhibitor. Prevents complement-mediated C5 activation by binding to C5. Binds C5 at a different binding site than the other tick complement inhibitors OmCI and CirpT1, and the drug eculizumab. The sequence is that of Complement inhibitor RaCI2 from Rhipicephalus microplus (Cattle tick).